Consider the following 189-residue polypeptide: Interleukin-23 subunit alpha (189 aa).

An N-terminal signal peptide occupies residues 1-19 (MLGSRAVMLLLLLPWTAQG). Residues Cys77 and Cys89 are joined by a disulfide bond.

This sequence belongs to the IL-6 superfamily. Heterodimer with IL12B; disulfide-linked. The heterodimer is known as interleukin IL-23. Interacts with IL23R; this interaction enables recruitment of IL12RB1. As to expression, secreted by activated dendritic and phagocytic cells and keratinocytes. Also expressed by dermal Langerhans cells (at protein level).

Its subcellular location is the secreted. Functionally, associates with IL12B to form the pro-inflammatory cytokine IL-23 that plays different roles in innate and adaptive immunity. Released by antigen-presenting cells such as dendritic cells or macrophages, binds to a heterodimeric receptor complex composed of IL12RB1 and IL23R to activate JAK2 and TYK2 which then phosphorylate the receptor to form a docking site leading to the phosphorylation of STAT3 and STAT4. This process leads to activation of several pathways including p38 MAPK or NF-kappa-B and promotes the production of pro-inflammatory cytokines such as interleukin-17A/IL17A. In turn, participates in the early and effective intracellular bacterial clearance. Promotes the expansion and survival of T-helper 17 cells, a CD4-positive helper T-cell subset that produces IL-17, as well as other IL-17-producing cells. In Homo sapiens (Human), this protein is Interleukin-23 subunit alpha (IL23A).